Consider the following 66-residue polypeptide: Large ribosomal subunit protein uL29 (66 aa).

Belongs to the universal ribosomal protein uL29 family.

This Agrobacterium fabrum (strain C58 / ATCC 33970) (Agrobacterium tumefaciens (strain C58)) protein is Large ribosomal subunit protein uL29.